The following is an 80-amino-acid chain: Sulfur carrier protein TusA (80 aa).

Cysteine 17 serves as the catalytic Cysteine persulfide intermediate.

Belongs to the sulfur carrier protein TusA family.

It localises to the cytoplasm. In terms of biological role, sulfur carrier protein which probably makes part of a sulfur-relay system. This is Sulfur carrier protein TusA from Pseudomonas putida (strain ATCC 47054 / DSM 6125 / CFBP 8728 / NCIMB 11950 / KT2440).